The chain runs to 377 residues: MRAIGVFEYITLRAVLACATALLIGLVAGPRVIRRLTEMKIGQAVRAYGPESHLVKTGTPTMGGALILIAIAISTLLWADWINRFVWVVLLVTFGFGWIGWMDDYRKVVYRDPEGMPARQKFFWQATIGLVAAVYLAFAVSAPANTELWPLFKAWVGSGFTMPLPTRADLIVPFFKSVSYPLGVLGFVALTWAVIVGTSNAVNLTDGLDGLAIMPTVMVGSALGIFAYVVGRVDYSKYLLFPYIPGAAELMVLCAAIGGAGLAFLWFNAYPAQVFMGDVGALALGGALGTIAVIVRQEIVLFIMGGVFVVETLSVMVQVTWFKYTKRKYGQGRRIFRMAPLHHHFEVGGWKETQVVVRFWIITMMLVLVGLSTLKLR.

Transmembrane regions (helical) follow at residues 9–29, 62–82, 85–105, 122–142, 155–175, 178–198, 210–230, 247–267, 274–294, 299–319, and 354–374; these read YITLRAVLACATALLIGLVAG, MGGALILIAIAISTLLWADWI, FVWVVLLVTFGFGWIGWMDDY, FFWQATIGLVAAVYLAFAVSA, WVGSGFTMPLPTRADLIVPFF, VSYPLGVLGFVALTWAVIVGT, GLAIMPTVMVGSALGIFAYVV, AAELMVLCAAIGGAGLAFLWF, VFMGDVGALALGGALGTIAVI, IVLFIMGGVFVVETLSVMVQV, and QVVVRFWIITMMLVLVGLSTL.

This sequence belongs to the glycosyltransferase 4 family. MraY subfamily. The cofactor is Mg(2+).

It is found in the cell inner membrane. The enzyme catalyses UDP-N-acetyl-alpha-D-muramoyl-L-alanyl-gamma-D-glutamyl-meso-2,6-diaminopimeloyl-D-alanyl-D-alanine + di-trans,octa-cis-undecaprenyl phosphate = di-trans,octa-cis-undecaprenyl diphospho-N-acetyl-alpha-D-muramoyl-L-alanyl-D-glutamyl-meso-2,6-diaminopimeloyl-D-alanyl-D-alanine + UMP. Its pathway is cell wall biogenesis; peptidoglycan biosynthesis. Functionally, catalyzes the initial step of the lipid cycle reactions in the biosynthesis of the cell wall peptidoglycan: transfers peptidoglycan precursor phospho-MurNAc-pentapeptide from UDP-MurNAc-pentapeptide onto the lipid carrier undecaprenyl phosphate, yielding undecaprenyl-pyrophosphoryl-MurNAc-pentapeptide, known as lipid I. This chain is Phospho-N-acetylmuramoyl-pentapeptide-transferase, found in Bordetella parapertussis (strain 12822 / ATCC BAA-587 / NCTC 13253).